A 513-amino-acid polypeptide reads, in one-letter code: UDP-N-acetylmuramyl-tripeptide synthetase (513 aa).

Residue serine 38 participates in UDP-N-acetyl-alpha-D-muramoyl-L-alanyl-D-glutamate binding. 115 to 121 (GTKGKTT) is a binding site for ATP. UDP-N-acetyl-alpha-D-muramoyl-L-alanyl-D-glutamate contacts are provided by residues 161–162 (TT), serine 188, and arginine 196. Position 230 is an N6-carboxylysine (lysine 230).

The protein belongs to the MurCDEF family. MurE subfamily. Carboxylation is probably crucial for Mg(2+) binding and, consequently, for the gamma-phosphate positioning of ATP.

The protein resides in the cytoplasm. It functions in the pathway cell wall biogenesis; peptidoglycan biosynthesis. Functionally, catalyzes the addition of an amino acid to the nucleotide precursor UDP-N-acetylmuramoyl-L-alanyl-D-glutamate (UMAG) in the biosynthesis of bacterial cell-wall peptidoglycan. The sequence is that of UDP-N-acetylmuramyl-tripeptide synthetase from Latilactobacillus sakei subsp. sakei (strain 23K) (Lactobacillus sakei subsp. sakei).